The sequence spans 551 residues: Hydroxymethylpyrimidine/phosphomethylpyrimidine kinase THI20 (551 aa).

Gln64 serves as a coordination point for 4-amino-5-hydroxymethyl-2-methylpyrimidine. The active-site Nucleophile is Cys468. Glu540 functions as the Proton donor in the catalytic mechanism.

In the N-terminal section; belongs to the ThiD family. It in the C-terminal section; belongs to the thiaminase-2 family.

The catalysed reaction is 4-amino-5-hydroxymethyl-2-methylpyrimidine + ATP = 4-amino-2-methyl-5-(phosphooxymethyl)pyrimidine + ADP + H(+). The enzyme catalyses 4-amino-2-methyl-5-(phosphooxymethyl)pyrimidine + ATP = 4-amino-2-methyl-5-(diphosphooxymethyl)pyrimidine + ADP. It catalyses the reaction thiamine + H2O = 5-(2-hydroxyethyl)-4-methylthiazole + 4-amino-5-hydroxymethyl-2-methylpyrimidine + H(+). The protein operates within cofactor biosynthesis; thiamine diphosphate biosynthesis; 4-amino-2-methyl-5-diphosphomethylpyrimidine from 5-amino-1-(5-phospho-D-ribosyl)imidazole: step 2/3. Its pathway is cofactor biosynthesis; thiamine diphosphate biosynthesis; 4-amino-2-methyl-5-diphosphomethylpyrimidine from 5-amino-1-(5-phospho-D-ribosyl)imidazole: step 3/3. Its function is as follows. Trifunctional protein with both thiamine biosynthetic and degradative activity. Within the thiamine biosynthesis pathway, catalyzes the phosphorylation of hydroxymethylpyrimidine (HMP) to hydroxymethylpyrimidine phosphate (HMP-P), as well as of HMP-P to HMP-PP. Also has thiaminase II activity and degrades thiamine using water as the nucleophile, resulting only in the formation of HMP (4-amino-2-methyl-5-hydroxymethylpyrimidine) and Thz (4-methyl-5-thiazole ethanol). The sequence is that of Hydroxymethylpyrimidine/phosphomethylpyrimidine kinase THI20 from Saccharomyces cerevisiae (strain ATCC 204508 / S288c) (Baker's yeast).